The following is a 660-amino-acid chain: Bifunctional polymyxin resistance protein ArnA (660 aa).

Residues 1 to 304 (MKAIVFAYHD…EMGIVTDVRV (304 aa)) form a formyltransferase ArnAFT region. Catalysis depends on His-104, which acts as the Proton donor; for formyltransferase activity. (6R)-10-formyltetrahydrofolate is bound by residues Arg-114 and 136 to 140 (TAKAD). The tract at residues 314–660 (RRQRVLILGV…RGAVEELGNK (347 aa)) is dehydrogenase ArnADH. NAD(+) contacts are provided by residues Asp-347 and 368–369 (DV). UDP-alpha-D-glucuronate-binding positions include Ala-393, Tyr-398, and 432–433 (TS). The active-site Proton acceptor; for decarboxylase activity is Glu-434. Residues Arg-460, Asn-492, 526–535 (KLVDGGEQKR), and Tyr-613 each bind UDP-alpha-D-glucuronate. Arg-619 functions as the Proton donor; for decarboxylase activity in the catalytic mechanism.

This sequence in the N-terminal section; belongs to the Fmt family. UDP-L-Ara4N formyltransferase subfamily. The protein in the C-terminal section; belongs to the NAD(P)-dependent epimerase/dehydratase family. UDP-glucuronic acid decarboxylase subfamily. Homohexamer, formed by a dimer of trimers.

It carries out the reaction UDP-alpha-D-glucuronate + NAD(+) = UDP-beta-L-threo-pentopyranos-4-ulose + CO2 + NADH. The enzyme catalyses UDP-4-amino-4-deoxy-beta-L-arabinose + (6R)-10-formyltetrahydrofolate = UDP-4-deoxy-4-formamido-beta-L-arabinose + (6S)-5,6,7,8-tetrahydrofolate + H(+). It participates in nucleotide-sugar biosynthesis; UDP-4-deoxy-4-formamido-beta-L-arabinose biosynthesis; UDP-4-deoxy-4-formamido-beta-L-arabinose from UDP-alpha-D-glucuronate: step 1/3. It functions in the pathway nucleotide-sugar biosynthesis; UDP-4-deoxy-4-formamido-beta-L-arabinose biosynthesis; UDP-4-deoxy-4-formamido-beta-L-arabinose from UDP-alpha-D-glucuronate: step 3/3. The protein operates within bacterial outer membrane biogenesis; lipopolysaccharide biosynthesis. Functionally, bifunctional enzyme that catalyzes the oxidative decarboxylation of UDP-glucuronic acid (UDP-GlcUA) to UDP-4-keto-arabinose (UDP-Ara4O) and the addition of a formyl group to UDP-4-amino-4-deoxy-L-arabinose (UDP-L-Ara4N) to form UDP-L-4-formamido-arabinose (UDP-L-Ara4FN). The modified arabinose is attached to lipid A and is required for resistance to polymyxin and cationic antimicrobial peptides. This chain is Bifunctional polymyxin resistance protein ArnA, found in Proteus mirabilis (strain HI4320).